Reading from the N-terminus, the 518-residue chain is Glutamate--cysteine ligase (518 aa).

Belongs to the glutamate--cysteine ligase type 1 family. Type 1 subfamily.

The enzyme catalyses L-cysteine + L-glutamate + ATP = gamma-L-glutamyl-L-cysteine + ADP + phosphate + H(+). Its pathway is sulfur metabolism; glutathione biosynthesis; glutathione from L-cysteine and L-glutamate: step 1/2. This Escherichia coli O7:K1 (strain IAI39 / ExPEC) protein is Glutamate--cysteine ligase.